A 488-amino-acid polypeptide reads, in one-letter code: Protein nucleotidyltransferase YdiU (488 aa).

The ATP site is built by glycine 91, glycine 93, arginine 94, lysine 114, aspartate 126, glycine 127, arginine 177, and arginine 184. The active-site Proton acceptor is the aspartate 253. Mg(2+)-binding residues include asparagine 254 and aspartate 263. Residue aspartate 263 participates in ATP binding.

This sequence belongs to the SELO family. Mg(2+) is required as a cofactor. Mn(2+) serves as cofactor.

The enzyme catalyses L-seryl-[protein] + ATP = 3-O-(5'-adenylyl)-L-seryl-[protein] + diphosphate. The catalysed reaction is L-threonyl-[protein] + ATP = 3-O-(5'-adenylyl)-L-threonyl-[protein] + diphosphate. It catalyses the reaction L-tyrosyl-[protein] + ATP = O-(5'-adenylyl)-L-tyrosyl-[protein] + diphosphate. It carries out the reaction L-histidyl-[protein] + UTP = N(tele)-(5'-uridylyl)-L-histidyl-[protein] + diphosphate. The enzyme catalyses L-seryl-[protein] + UTP = O-(5'-uridylyl)-L-seryl-[protein] + diphosphate. The catalysed reaction is L-tyrosyl-[protein] + UTP = O-(5'-uridylyl)-L-tyrosyl-[protein] + diphosphate. In terms of biological role, nucleotidyltransferase involved in the post-translational modification of proteins. It can catalyze the addition of adenosine monophosphate (AMP) or uridine monophosphate (UMP) to a protein, resulting in modifications known as AMPylation and UMPylation. In Bacillus thuringiensis subsp. konkukian (strain 97-27), this protein is Protein nucleotidyltransferase YdiU.